A 593-amino-acid chain; its full sequence is MSDPCWEQCVSCLQNELPSQQFNTWIRPLRVEESSTLLLRLIAPNRFVQDWVNDKYRTRIEEIISNSDAGPKSLEIAVAQRARAGFEVVRNAKVAPAVPVPDPLPSTGRDESSFQPPKGNTSADYSGHSDLGFQSPHRRQSPFSESQERFTQPLEMSRFGSGRPSNERSNEGAIGGSTESSADRERIPLQGVVEDLFKPTKNSNDFVEPRSTDPLLEIESRPIIETVSPRDIQDFGSQLTSRVKKKDVEGGIQHKHNLNTTFIFDNFVVGKSNQLGLAAASQVAENPGGAYNPLFIYGGVGLGKTHLMHAVGNALVQRKPGARVVYLHSERFVADMVKALQLNAISDFKRFYRSVDALLIDDIQFFAGKERSQEEFFHTFNALLEGGQQIILTCDKYPKEINGLEERLKSRFGWGLTVAIEPPELETRVAILKRKAESSRMPLPDDAAFFIAQRIRSNVRELEGALKRVIANAQFTQRSISVELVREALKDLLALQDRLVSIDNIQRVVAEYYKIKVSDLHSKRRSRSVARPRQVAMYLAKDLTHHSLPEIGDAFGGRDHTTVLHACRKIRDLQESDADIREDVKNLLRTLTT.

The interval 1-71 (MSDPCWEQCV…EIISNSDAGP (71 aa)) is domain I, interacts with DnaA modulators. A domain II region spans residues 71–256 (PKSLEIAVAQ…DVEGGIQHKH (186 aa)). A disordered region spans residues 97–186 (AVPVPDPLPS…STESSADRER (90 aa)). Polar residues predominate over residues 113-124 (SFQPPKGNTSAD). Residues 257 to 473 (NLNTTFIFDN…GALKRVIANA (217 aa)) are domain III, AAA+ region. ATP contacts are provided by G301, G303, K304, and T305. Residues 474-593 (QFTQRSISVE…VKNLLRTLTT (120 aa)) are domain IV, binds dsDNA.

The protein belongs to the DnaA family. As to quaternary structure, oligomerizes as a right-handed, spiral filament on DNA at oriC.

The protein localises to the cytoplasm. Functionally, plays an essential role in the initiation and regulation of chromosomal replication. ATP-DnaA binds to the origin of replication (oriC) to initiate formation of the DNA replication initiation complex once per cell cycle. Binds the DnaA box (a 9 base pair repeat at the origin) and separates the double-stranded (ds)DNA. Forms a right-handed helical filament on oriC DNA; dsDNA binds to the exterior of the filament while single-stranded (ss)DNA is stabiized in the filament's interior. The ATP-DnaA-oriC complex binds and stabilizes one strand of the AT-rich DNA unwinding element (DUE), permitting loading of DNA polymerase. After initiation quickly degrades to an ADP-DnaA complex that is not apt for DNA replication. Binds acidic phospholipids. The protein is Chromosomal replication initiator protein DnaA of Teredinibacter turnerae (strain ATCC 39867 / T7901).